Here is a 260-residue protein sequence, read N- to C-terminus: Proansamycin X synthase (260 aa).

C73 functions as the Acyl-thioester intermediate in the catalytic mechanism. Active-site residues include H111 and D126.

It belongs to the arylamine N-acetyltransferase family.

It functions in the pathway antibiotic biosynthesis; rifamycin B biosynthesis. Functionally, catalyzes the release of the completed linear polyketide from the rif PKS by forming an intramolecular amide bond, in this way terminating polyketide assembly and forming the macrocyclic compound proansamycin X, an intermediate in the rifamycin B biosynthesis. The polypeptide is Proansamycin X synthase (rifF) (Amycolatopsis mediterranei (strain S699) (Nocardia mediterranei)).